A 353-amino-acid chain; its full sequence is Melatonin receptor type 1A (353 aa).

The segment covering 1–15 has biased composition (polar residues); sequence MKGNGSTLLNASQQA. Residues 1–23 are disordered; it reads MKGNGSTLLNASQQAPGVGEGGG. The Extracellular segment spans residues 1–32; sequence MKGNGSTLLNASQQAPGVGEGGGPRPSWLAST. N-linked (GlcNAc...) asparagine glycans are attached at residues asparagine 4 and asparagine 10. Residues 33–53 form a helical membrane-spanning segment; sequence LAFILIFTIVVDILGNLLVIL. The Cytoplasmic segment spans residues 54-66; sequence SVYRNKKLRNAGN. Residues 67 to 87 form a helical membrane-spanning segment; it reads IFVVSLAIADLVVAIYPYPLV. The Extracellular portion of the chain corresponds to 88-105; the sequence is LTSIFNNGWNLGYLHCQI. A disulfide bond links cysteine 103 and cysteine 180. Residues 106-126 form a helical membrane-spanning segment; that stretch reads SAFLMGLSVIGSIFNITGIAI. Residues 127–147 are Cytoplasmic-facing; it reads NRYCYICHSLKYDRLYSNKNS. A helical transmembrane segment spans residues 148-168; the sequence is LCYVFLIWVLTLVAIMPNLQT. Topologically, residues 169–190 are extracellular; the sequence is GTLQYDPRIYSCTFTQSVSSAY. Residues 191 to 211 traverse the membrane as a helical segment; it reads TIAVVVFHFIVPMIIVIFCYL. Topologically, residues 212–243 are cytoplasmic; it reads RIWILVLQVRRRVKPDSKPRLKPQDFRNFVTM. A helical transmembrane segment spans residues 244-264; sequence FVVFVLFAICWAPLNFIGLIV. At 265–277 the chain is on the extracellular side; the sequence is ASDPATMAPRIPE. A helical transmembrane segment spans residues 278-298; the sequence is WLFVASYYMAYFNSCLNAIIY. At 299-353 the chain is on the cytoplasmic side; sequence GLLNQNFRQEYKRILVSLFTAKMCFVDSSNDPADKIKCKPAPLIANNNLIKVDSV.

This sequence belongs to the G-protein coupled receptor 1 family. As to expression, at least in the brain, more precisely in the pars tuberalis and the suprachiasmatic nucleus.

The protein resides in the cell membrane. In terms of biological role, high affinity receptor for melatonin. Likely to mediate the reproductive and circadian actions of melatonin. The activity of this receptor is mediated by pertussis toxin sensitive G proteins that inhibit adenylate cyclase activity. Possibly involved in sleep induction, by melatonin activation of the potassium channel KCNMA1/BK and the dissociation of G-beta and G-gamma subunits, thereby decreasing synaptic transmission. The sequence is that of Melatonin receptor type 1A (MTNR1A) from Phodopus sungorus (Striped hairy-footed hamster).